The following is a 164-amino-acid chain: Shikimate kinase (164 aa).

11–16 contacts ATP; it reads GSGKST. S15 contributes to the Mg(2+) binding site. D33, R57, and G79 together coordinate substrate. Residue R117 participates in ATP binding. R134 contacts substrate.

This sequence belongs to the shikimate kinase family. In terms of assembly, monomer. It depends on Mg(2+) as a cofactor.

The protein localises to the cytoplasm. The catalysed reaction is shikimate + ATP = 3-phosphoshikimate + ADP + H(+). Its pathway is metabolic intermediate biosynthesis; chorismate biosynthesis; chorismate from D-erythrose 4-phosphate and phosphoenolpyruvate: step 5/7. In terms of biological role, catalyzes the specific phosphorylation of the 3-hydroxyl group of shikimic acid using ATP as a cosubstrate. In Persephonella marina (strain DSM 14350 / EX-H1), this protein is Shikimate kinase.